Here is a 463-residue protein sequence, read N- to C-terminus: Serine/threonine-protein kinase tricornered (463 aa).

The Protein kinase domain occupies 93 to 394; that stretch reads FEALKVIGRG…LEDLKSVPFF (302 aa). ATP-binding positions include 99–107 and Lys122; that span reads IGRGAFGEV. The segment at 119–180 is interaction with mats and Mob1; that stretch reads YAMKVLRKAD…EFLPGGDMMT (62 aa). The active-site Proton acceptor is the Asp216. The residue at position 292 (Ser292) is a Phosphoserine. One can recognise an AGC-kinase C-terminal domain in the interval 395–463; sequence RGVDWEHIRE…YKRFEVRNLE (69 aa). Thr453 carries the phosphothreonine modification.

This sequence belongs to the protein kinase superfamily. AGC Ser/Thr protein kinase family. In terms of assembly, interacts with, and is activated by, Mob1. It depends on Mg(2+) as a cofactor. As to expression, expressed in the peripheral and central nervous system (at protein level). Expressed in the wing imaginal disk.

The protein localises to the cytoplasm. The protein resides in the nucleus. It catalyses the reaction L-seryl-[protein] + ATP = O-phospho-L-seryl-[protein] + ADP + H(+). The catalysed reaction is L-threonyl-[protein] + ATP = O-phospho-L-threonyl-[protein] + ADP + H(+). With respect to regulation, activated by fry. Functionally, serine/threonine-protein kinase involved in controlling cell structure and proliferation of a variety of polarized outgrowths including epidermal hairs, bristles, arista laterals, and dendrites. Together with fry, maintains the integrity of epidermal hairs and is an essential component of the signaling pathway regulating dendritic branching of sensory neurons. Reduces neurite outgrowth by phosphorylating pav, thereby inhibiting its function in microtubule-microtubule sliding. The chain is Serine/threonine-protein kinase tricornered from Drosophila melanogaster (Fruit fly).